We begin with the raw amino-acid sequence, 369 residues long: Protein FAM187B (369 aa).

The signal sequence occupies residues 1–17 (MPPMLWLLLNFAAPALG). Topologically, residues 18 to 333 (FYFSISCPSG…PGRADSVLKG (316 aa)) are extracellular. Asn-45, Asn-68, and Asn-130 each carry an N-linked (GlcNAc...) asparagine glycan. A helical membrane pass occupies residues 334–354 (LKLVLLVGTVLVLLGALLKFI). Over 355–369 (RPSPGKRSKQVLMVK) the chain is Cytoplasmic.

It belongs to the FAM187 family.

The protein localises to the membrane. This is Protein FAM187B (FAM187B) from Macaca fascicularis (Crab-eating macaque).